We begin with the raw amino-acid sequence, 478 residues long: Probable cyclin-dependent kinase 9 (478 aa).

Polar residues predominate over residues 1–17; it reads MSAQNYHAGLHQSSTQR. The interval 1-55 is disordered; sequence MSAQNYHAGLHQSSTQRPPKRPNTEHAQEPPKRALIGGQTTPSSSGGGQTPNGTN. Basic and acidic residues predominate over residues 22 to 32; it reads PNTEHAQEPPK. In terms of domain architecture, Protein kinase spans 85-413; that stretch reads YEKLNKIGQG…SDEAEDDIWF (329 aa). ATP contacts are provided by residues 91–99 and Lys114; that span reads IGQGTFGEV. Residue Asp217 is the Proton acceptor of the active site. The disordered stretch occupies residues 444–478; it reads HANRGRHQNAQQRPNQQQARPSNAIPAGQYRDTIF. The segment covering 451–464 has biased composition (low complexity); it reads QNAQQRPNQQQARP.

This sequence belongs to the protein kinase superfamily. CMGC Ser/Thr protein kinase family. CDC2/CDKX subfamily. As to quaternary structure, associates with cyclin-T (cit-1.1 or cit-1.2) to form P-TEFb.

The protein resides in the nucleus. The enzyme catalyses L-seryl-[protein] + ATP = O-phospho-L-seryl-[protein] + ADP + H(+). It catalyses the reaction L-threonyl-[protein] + ATP = O-phospho-L-threonyl-[protein] + ADP + H(+). The catalysed reaction is [DNA-directed RNA polymerase] + ATP = phospho-[DNA-directed RNA polymerase] + ADP + H(+). Its function is as follows. Essential member of the cyclin-dependent kinase pair (CDK9/cyclin-T) complex, also called positive transcription elongation factor B (P-TEFb), which is proposed to facilitate the transition from abortive to production elongation by phosphorylating the CTD (C-terminal domain) of the large subunit of RNA polymerase II (RNAP II) and spt-5. The chain is Probable cyclin-dependent kinase 9 (cdk-9) from Caenorhabditis elegans.